A 253-amino-acid polypeptide reads, in one-letter code: MAYKYDRDLEFLKQLESSDLLDLFEVLVFGKDGEKRHNEKLTSSIEYKRHGDDYAKYAERIAEELQYYGSNSFASFIKGEGVLYKEILCDVCDKLKVNYNKKTETTLIEQNMLSKILERSLEEMDDEEVKEMCDELSIKNTDNLNRQALSAATLTLFKMGGFKSYQLAVIVANAVAKTILGRGLSLAGNQVLTRTLSFLTGPVGWIITGVWTAIDIAGPAYRVTIPACIVVATLRLKTQQANEDKKSLQIESV.

The protein belongs to the UPF0174 family.

This Helicobacter pylori (strain J99 / ATCC 700824) (Campylobacter pylori J99) protein is UPF0174 protein jhp_1494.